The sequence spans 321 residues: uncharacterized protein (321 aa).

9 consecutive transmembrane segments (helical) span residues 12–32 (IGVE…WAAT), 52–72 (LITS…AFLV), 86–106 (ILMS…ILII), 109–129 (LTGL…QQWF), 136–156 (FVIS…LVLA), 168–188 (DSLS…LFVG), 214–234 (WGMI…FTFL), 254–274 (KEIP…GLFF), and 292–312 (IFIC…QIFA).

It is found in the cell membrane. This is an uncharacterized protein from Campylobacter jejuni subsp. jejuni serotype O:2 (strain ATCC 700819 / NCTC 11168).